Reading from the N-terminus, the 783-residue chain is MVAKPPVMSFHFAQDLWPEQNIKDSFQKVTLRRYGKCEYENLQLRKGCKHVDECTGHKGGHNTVNQCLTATPSKIFQCNKYVKVFDKFSNSNRYKRRHTGNKHFKCKECSKSFCVLSQLTQHRRIHTRVNSYKCEECGKAFNWFSTLTKHKRIHTGEKPYKCEECGKAFNQSSQLTRHKIIHTEEKPNKCEECGKAFKQASHLTIHKIIHTGEKPYKYEECGKVFSQSSHLTTQKILHTGENLYKCKECGKAFNLFSNLTNHKRIHAGEKPYKCKECGRAFNISSNLNKQEKIHTGGKLNKCEECDKAFNRSLKLTAHKKILMEEKPYKCEECGKVFNQFSTLTRHKIIHTGEKPYKCKECGKAFNQSSNLTEHKKIHTAEKSYKCEECGKAFNQHSNLINHRKIYSGEKPYKCEECGKAFNRSSTLTRHKKIHTGEKPYKCEECDRAFSQSSNLTEHKKIHTGEKPYKCEECGKAFNRFSTLTKHKRIHTGEKPYKCEECGKAFNQSYQLTRHKIVHTKEKLNKCEEFGKAFKQSSHRTIHKIIHTGEKPYKCEEHGKVFNQSSNLTTQKIIHTGENLYKFEEHGKAFNLFSNITNHKIIYTGEKPHKCEECGKAYNRFSNLTIHKRIHTGEKPYQCAECGKAFNCSSTLNRHKIIHTGEKPYKCKECGKAFNLSSTLTAHKKIHTGEKPYKCEECGKAFNQSSNLTTHKKIHTSEKPYKCEECGKSFNQFSSLNIHKIIHTGEKPYKCGDYGRAFNLSSNLTTHKKIHTGEKPYKCEYGKT.

A C2H2-type 1; atypical zinc finger spans residues 76–98 (FQCNKYVKVFDKFSNSNRYKRRH). C2H2-type zinc fingers lie at residues 104-126 (FKCK…RRIH), 132-154 (YKCE…KRIH), and 160-182 (YKCE…KIIH). A Glycyl lysine isopeptide (Lys-Gly) (interchain with G-Cter in SUMO2) cross-link involves residue lysine 186. The C2H2-type 5 zinc-finger motif lies at 188 to 210 (NKCEECGKAFKQASHLTIHKIIH). The C2H2-type 6; atypical zinc finger occupies 216 to 238 (YKYEECGKVFSQSSHLTTQKILH). The C2H2-type 7 zinc finger occupies 244 to 266 (YKCKECGKAFNLFSNLTNHKRIH). A C2H2-type 8; atypical zinc finger spans residues 272 to 294 (YKCKECGRAFNISSNLNKQEKIH). A C2H2-type 9; atypical zinc finger spans residues 300–322 (NKCEECDKAFNRSLKLTAHKKIL). C2H2-type zinc fingers lie at residues 328-350 (YKCE…KIIH) and 356-378 (YKCK…KKIH). Residues 384-406 (YKCEECGKAFNQHSNLINHRKIY) form a C2H2-type 12; atypical zinc finger. 4 C2H2-type zinc fingers span residues 412 to 434 (YKCE…KKIH), 440 to 462 (YKCE…KKIH), 468 to 490 (YKCE…KRIH), and 496 to 518 (YKCE…KIVH). A C2H2-type 17; atypical zinc finger spans residues 524-546 (NKCEEFGKAFKQSSHRTIHKIIH). The segment at 552 to 574 (YKCEEHGKVFNQSSNLTTQKIIH) adopts a C2H2-type 18; atypical zinc-finger fold. A C2H2-type 19; atypical zinc finger spans residues 580–602 (YKFEEHGKAFNLFSNITNHKIIY). 5 consecutive C2H2-type zinc fingers follow at residues 608-630 (HKCE…KRIH), 636-658 (YQCA…KIIH), 664-686 (YKCK…KKIH), 692-714 (YKCE…KKIH), and 720-742 (YKCE…KIIH). Residues 748–770 (YKCGDYGRAFNLSSNLTTHKKIH) form a C2H2-type 25; atypical zinc finger.

Belongs to the krueppel C2H2-type zinc-finger protein family. In terms of tissue distribution, expressed in brain, heart, skeletal muscle, kidney and pancreas. Weakly expressed in aorta, liver and lung.

It is found in the nucleus. In terms of biological role, may be involved in transcriptional regulation. This chain is Zinc finger protein 107 (ZNF107), found in Homo sapiens (Human).